Reading from the N-terminus, the 82-residue chain is Ice-structuring protein B (82 aa).

A signal peptide spans Met1–Ala23. A propeptide spans Arg24–Pro44 (removed by a dipeptidylpeptidase). Arg81 is subject to Arginine amide.

It belongs to the type-I AFP family. Amidated. Detected in liver (at protein level).

It is found in the secreted. The protein resides in the extracellular space. In terms of biological role, contributes to protect fish blood from freezing at subzero sea water temperatures. Lowers the blood freezing point. Binds to nascent ice crystals and prevents further growth. This is Ice-structuring protein B from Pseudopleuronectes americanus (Winter flounder).